The sequence spans 743 residues: POU domain, class 2, transcription factor 1 (743 aa).

The span at Met-1–Ser-11 shows a compositional bias: polar residues. Disordered stretches follow at residues Met-1–Pro-34, Ser-67–Ala-95, Ala-258–Ser-283, and Ser-357–Lys-381. A compositionally biased stretch (low complexity) spans Ser-81 to Ala-95. Residues Thr-270 and Thr-276 each carry the phosphothreonine modification. In terms of domain architecture, POU-specific spans Glu-280–Glu-354. Ser-283 bears the Phosphoserine mark. Positions Ser-357 to Pro-371 are enriched in low complexity. The homeobox DNA-binding region spans Arg-379–Asn-438. Residues Ser-385 and Ser-448 each carry the phosphoserine modification. The span at Val-494–Asn-504 shows a compositional bias: polar residues. The tract at residues Val-494–Leu-557 is disordered. The segment covering Thr-505 to Leu-557 has biased composition (low complexity).

The protein belongs to the POU transcription factor family. Class-2 subfamily. In terms of assembly, interacts with POU2AF1; the interaction increases POU2F1 transactivation activity. Interacts with NR3C1, AR, PGR and HCFC1. (Microbial infection) Associates with the herpes simplex virus VP16-induced complex; binding to HCFC1 activates the viral transcriptional activator VP16 for association with POU2F1, to form a multiprotein-DNA complex responsible for activating transcription of the viral immediate early genes. As to quaternary structure, (Microbial infection) Interacts with human herpesvirus 8 (KSHV) protein RTA/ORF50; this interaction enhances RTA/ORF50-mediated transactivation of several viral promoters including K-bZIP promoter. Phosphorylated by PRKDC. Ubiquitous. Isoform 2 is lymphocyte-specific.

The protein resides in the nucleus. Functionally, transcription factor that binds to the octamer motif (5'-ATTTGCAT-3') and activates the promoters of the genes for some small nuclear RNAs (snRNA) and of genes such as those for histone H2B and immunoglobulins. Modulates transcription transactivation by NR3C1, AR and PGR. In terms of biological role, (Microbial infection) In case of human herpes simplex virus (HSV) infection, POU2F1 forms a multiprotein-DNA complex with the viral transactivator protein VP16 and HCFC1 thereby enabling the transcription of the viral immediate early genes. In Homo sapiens (Human), this protein is POU domain, class 2, transcription factor 1 (POU2F1).